Reading from the N-terminus, the 260-residue chain is 14-3-3 protein 3 (260 aa).

This sequence belongs to the 14-3-3 family. Homodimer.

The protein is 14-3-3 protein 3 (TFT3) of Solanum lycopersicum (Tomato).